We begin with the raw amino-acid sequence, 44 residues long: Photosystem I reaction center subunit IX (44 aa).

A helical membrane pass occupies residues 7 to 27 (YLSVAPVLTTLWFGSLAGLLI).

It belongs to the PsaJ family.

It is found in the plastid. Its subcellular location is the chloroplast thylakoid membrane. May help in the organization of the PsaE and PsaF subunits. This is Photosystem I reaction center subunit IX from Nymphaea alba (White water-lily).